Reading from the N-terminus, the 278-residue chain is Putative peptidase Cgl1093 (278 aa).

A signal peptide spans 1 to 32; that stretch reads MSSASFTTKALSVLAALTAASAPLVAASPAHA. Residues 33–236 form the Peptidase S1 domain; that stretch reads LANARNVTGS…HAEWIAYYTG (204 aa). C59 and C75 are disulfide-bonded. Active-site charge relay system residues include H74, D123, and S189.

The protein belongs to the peptidase S1 family.

The protein resides in the secreted. In Corynebacterium glutamicum (strain ATCC 13032 / DSM 20300 / JCM 1318 / BCRC 11384 / CCUG 27702 / LMG 3730 / NBRC 12168 / NCIMB 10025 / NRRL B-2784 / 534), this protein is Putative peptidase Cgl1093.